The following is a 371-amino-acid chain: Spermatogenic leucine zipper protein 1 (371 aa).

2 coiled-coil regions span residues 96–148 and 177–289; these read EVSE…TVQD and FPHI…QKEE. Position 98 is a phosphoserine (Ser98). Residues 110 to 120 form a helix-loop-helix motif region; the sequence is INKELVKKLLA. A basic motif region spans residues 121–188; the sequence is SLDLGKKENA…HIQEENIRLR (68 aa). Ser202 is modified (phosphoserine). Polar residues predominate over residues 223 to 240; it reads KTLKNNGTHSPTQTNNES. The interval 223 to 246 is disordered; the sequence is KTLKNNGTHSPTQTNNESAKQELE. A leucine-zipper region spans residues 245-266; that stretch reads LEEQVKRLKEDTYSLHLIATLL.

In terms of processing, phosphorylated by MAPK1/ERK2 and MAPK3/ERK1.

It is found in the cytoplasm. Its subcellular location is the nucleus. Its function is as follows. Transcription factor that binds to the DNA sequence 5'-CANNTG-3'(E box) and the G-box motif. May play an important role in the regulation of cell proliferation and differentiation during spermatogenesis. This chain is Spermatogenic leucine zipper protein 1 (SPZ1), found in Bos taurus (Bovine).